Consider the following 338-residue polypeptide: Acetoin:2,6-dichlorophenolindophenol oxidoreductase subunit beta (338 aa).

Tetramer of 2 alpha and 2 beta subunits.

It participates in ketone degradation; acetoin degradation. Functionally, catalyzes the 2,6-dichlorophenolindophenol-dependent cleavage of acetoin into acetate and acetaldehyde, in vitro. The beta subunit is probably not the catalytic subunit of the enzyme. The sequence is that of Acetoin:2,6-dichlorophenolindophenol oxidoreductase subunit beta (acoB) from Cupriavidus necator (strain ATCC 17699 / DSM 428 / KCTC 22496 / NCIMB 10442 / H16 / Stanier 337) (Ralstonia eutropha).